Consider the following 455-residue polypeptide: Bifunctional protein GlmU (455 aa).

Residues 1–225 form a pyrophosphorylase region; sequence MNIVILAAGM…EWETLGVNSK (225 aa). UDP-N-acetyl-alpha-D-glucosamine is bound by residues 6–9, Lys-20, Gln-71, 76–77, 98–100, Gly-135, Glu-150, Asn-165, and Asn-223; these read LAAG, GT, and YGD. Asp-100 contributes to the Mg(2+) binding site. Asn-223 contributes to the Mg(2+) binding site. Positions 226 to 246 are linker; it reads VQLAELERIHQRNLAQQLLED. The interval 247-455 is N-acetyltransferase; sequence GVTLIDPARI…QRPVKQKKEG (209 aa). Residues Arg-329 and Lys-347 each coordinate UDP-N-acetyl-alpha-D-glucosamine. His-359 acts as the Proton acceptor in catalysis. Positions 362 and 373 each coordinate UDP-N-acetyl-alpha-D-glucosamine. Residues Ala-376, 382–383, Ser-401, Ala-419, and Arg-436 contribute to the acetyl-CoA site; that span reads NY.

In the N-terminal section; belongs to the N-acetylglucosamine-1-phosphate uridyltransferase family. The protein in the C-terminal section; belongs to the transferase hexapeptide repeat family. In terms of assembly, homotrimer. Mg(2+) serves as cofactor.

It is found in the cytoplasm. The catalysed reaction is alpha-D-glucosamine 1-phosphate + acetyl-CoA = N-acetyl-alpha-D-glucosamine 1-phosphate + CoA + H(+). The enzyme catalyses N-acetyl-alpha-D-glucosamine 1-phosphate + UTP + H(+) = UDP-N-acetyl-alpha-D-glucosamine + diphosphate. The protein operates within nucleotide-sugar biosynthesis; UDP-N-acetyl-alpha-D-glucosamine biosynthesis; N-acetyl-alpha-D-glucosamine 1-phosphate from alpha-D-glucosamine 6-phosphate (route II): step 2/2. It participates in nucleotide-sugar biosynthesis; UDP-N-acetyl-alpha-D-glucosamine biosynthesis; UDP-N-acetyl-alpha-D-glucosamine from N-acetyl-alpha-D-glucosamine 1-phosphate: step 1/1. It functions in the pathway bacterial outer membrane biogenesis; LPS lipid A biosynthesis. Functionally, catalyzes the last two sequential reactions in the de novo biosynthetic pathway for UDP-N-acetylglucosamine (UDP-GlcNAc). The C-terminal domain catalyzes the transfer of acetyl group from acetyl coenzyme A to glucosamine-1-phosphate (GlcN-1-P) to produce N-acetylglucosamine-1-phosphate (GlcNAc-1-P), which is converted into UDP-GlcNAc by the transfer of uridine 5-monophosphate (from uridine 5-triphosphate), a reaction catalyzed by the N-terminal domain. The polypeptide is Bifunctional protein GlmU (Ralstonia pickettii (strain 12J)).